The following is a 401-amino-acid chain: Ribosomal protein uS12 methylthiotransferase RimO (401 aa).

One can recognise an MTTase N-terminal domain in the interval 1–108; sequence MKINFINLGC…GIELLQTPKR (108 aa). [4Fe-4S] cluster-binding residues include cysteine 10, cysteine 43, cysteine 72, cysteine 124, cysteine 128, and cysteine 131. The Radical SAM core domain maps to 110 to 339; the sequence is LTTKHYAYLK…FNLSQEILEE (230 aa).

The protein belongs to the methylthiotransferase family. RimO subfamily. [4Fe-4S] cluster is required as a cofactor.

The protein localises to the cytoplasm. The enzyme catalyses L-aspartate(89)-[ribosomal protein uS12]-hydrogen + (sulfur carrier)-SH + AH2 + 2 S-adenosyl-L-methionine = 3-methylsulfanyl-L-aspartate(89)-[ribosomal protein uS12]-hydrogen + (sulfur carrier)-H + 5'-deoxyadenosine + L-methionine + A + S-adenosyl-L-homocysteine + 2 H(+). Functionally, catalyzes the methylthiolation of an aspartic acid residue of ribosomal protein uS12. The sequence is that of Ribosomal protein uS12 methylthiotransferase RimO from Hydrogenobaculum sp. (strain Y04AAS1).